The sequence spans 184 residues: MKNVTDSFVSLVHWPSAGSFGFNTDILATNPINLSVVLGVLIFFGKGVLSDLLDNRKQRILNTIRNSEELREGAIEQLEKARARLQDVQIEAEGYRAYGYFGIDEQRHESINSTYKTLEQLENNKNESIHFEQQRAINQVRQQIFQQALQGALGTLNSCLNNELHLRTISANIGLFGSMKELTD.

The helical transmembrane segment at 27-49 threads the bilayer; sequence LATNPINLSVVLGVLIFFGKGVL.

This sequence belongs to the ATPase B chain family. In terms of assembly, F-type ATPases have 2 components, F(1) - the catalytic core - and F(0) - the membrane proton channel. F(1) has five subunits: alpha(3), beta(3), gamma(1), delta(1), epsilon(1). F(0) has four main subunits: a(1), b(1), b'(1) and c(10-14). The alpha and beta chains form an alternating ring which encloses part of the gamma chain. F(1) is attached to F(0) by a central stalk formed by the gamma and epsilon chains, while a peripheral stalk is formed by the delta, b and b' chains.

Its subcellular location is the plastid. It localises to the chloroplast thylakoid membrane. Functionally, f(1)F(0) ATP synthase produces ATP from ADP in the presence of a proton or sodium gradient. F-type ATPases consist of two structural domains, F(1) containing the extramembraneous catalytic core and F(0) containing the membrane proton channel, linked together by a central stalk and a peripheral stalk. During catalysis, ATP synthesis in the catalytic domain of F(1) is coupled via a rotary mechanism of the central stalk subunits to proton translocation. In terms of biological role, component of the F(0) channel, it forms part of the peripheral stalk, linking F(1) to F(0). The protein is ATP synthase subunit b, chloroplastic of Oenothera elata subsp. hookeri (Hooker's evening primrose).